Here is a 478-residue protein sequence, read N- to C-terminus: ATP synthase subunit beta (478 aa).

An ATP-binding site is contributed by 152 to 159 (GGAGVGKT).

The protein belongs to the ATPase alpha/beta chains family. As to quaternary structure, F-type ATPases have 2 components, CF(1) - the catalytic core - and CF(0) - the membrane proton channel. CF(1) has five subunits: alpha(3), beta(3), gamma(1), delta(1), epsilon(1). CF(0) has three main subunits: a(1), b(2) and c(9-12). The alpha and beta chains form an alternating ring which encloses part of the gamma chain. CF(1) is attached to CF(0) by a central stalk formed by the gamma and epsilon chains, while a peripheral stalk is formed by the delta and b chains.

It localises to the cell membrane. It catalyses the reaction ATP + H2O + 4 H(+)(in) = ADP + phosphate + 5 H(+)(out). Produces ATP from ADP in the presence of a proton gradient across the membrane. The catalytic sites are hosted primarily by the beta subunits. This Wolbachia pipientis subsp. Culex pipiens (strain wPip) protein is ATP synthase subunit beta.